The chain runs to 195 residues: Mannitol operon repressor (195 aa).

It belongs to the MtlR/FumE family. In terms of assembly, homodimer. Can also form higher level multimer aggregates.

Involved in the repression of the expression of the mannitol mtlADR operon. Does not bind the operator/promoter regulatory region of this operon. Therefore, seems to belong to a new class of transcription factors in bacteria that may regulate gene expression indirectly, perhaps as a part of a larger transcriptional complex. The polypeptide is Mannitol operon repressor (Escherichia coli O6:H1 (strain CFT073 / ATCC 700928 / UPEC)).